The primary structure comprises 83 residues: Translational regulator CsrA (83 aa).

The protein belongs to the CsrA/RsmA family. As to quaternary structure, homodimer; the beta-strands of each monomer intercalate to form a hydrophobic core, while the alpha-helices form wings that extend away from the core.

Its subcellular location is the cytoplasm. In terms of biological role, a translational regulator that binds mRNA to regulate translation initiation and/or mRNA stability. Usually binds in the 5'-UTR at or near the Shine-Dalgarno sequence preventing ribosome-binding, thus repressing translation. Its main target seems to be the major flagellin gene, while its function is anatagonized by FliW. This Thermotoga maritima (strain ATCC 43589 / DSM 3109 / JCM 10099 / NBRC 100826 / MSB8) protein is Translational regulator CsrA.